Here is a 269-residue protein sequence, read N- to C-terminus: Formamidopyrimidine-DNA glycosylase (269 aa).

Proline 2 acts as the Schiff-base intermediate with DNA in catalysis. Glutamate 3 (proton donor) is an active-site residue. The Proton donor; for beta-elimination activity role is filled by lysine 57. Residues histidine 90, arginine 109, and arginine 150 each contribute to the DNA site. An FPG-type zinc finger spans residues asparagine 235–arginine 269. Catalysis depends on arginine 259, which acts as the Proton donor; for delta-elimination activity.

This sequence belongs to the FPG family. As to quaternary structure, monomer. Zn(2+) is required as a cofactor.

It catalyses the reaction Hydrolysis of DNA containing ring-opened 7-methylguanine residues, releasing 2,6-diamino-4-hydroxy-5-(N-methyl)formamidopyrimidine.. The catalysed reaction is 2'-deoxyribonucleotide-(2'-deoxyribose 5'-phosphate)-2'-deoxyribonucleotide-DNA = a 3'-end 2'-deoxyribonucleotide-(2,3-dehydro-2,3-deoxyribose 5'-phosphate)-DNA + a 5'-end 5'-phospho-2'-deoxyribonucleoside-DNA + H(+). Involved in base excision repair of DNA damaged by oxidation or by mutagenic agents. Acts as a DNA glycosylase that recognizes and removes damaged bases. Has a preference for oxidized purines, such as 7,8-dihydro-8-oxoguanine (8-oxoG). Has AP (apurinic/apyrimidinic) lyase activity and introduces nicks in the DNA strand. Cleaves the DNA backbone by beta-delta elimination to generate a single-strand break at the site of the removed base with both 3'- and 5'-phosphates. The chain is Formamidopyrimidine-DNA glycosylase from Alcanivorax borkumensis (strain ATCC 700651 / DSM 11573 / NCIMB 13689 / SK2).